Reading from the N-terminus, the 613-residue chain is Dihydroxy-acid dehydratase (613 aa).

D81 is a binding site for Mg(2+). C122 lines the [2Fe-2S] cluster pocket. Mg(2+) contacts are provided by D123 and K124. At K124 the chain carries N6-carboxylysine. Position 193 (C193) interacts with [2Fe-2S] cluster. E489 contacts Mg(2+). The active-site Proton acceptor is S515.

It belongs to the IlvD/Edd family. Homodimer. It depends on [2Fe-2S] cluster as a cofactor. The cofactor is Mg(2+).

The catalysed reaction is (2R)-2,3-dihydroxy-3-methylbutanoate = 3-methyl-2-oxobutanoate + H2O. It carries out the reaction (2R,3R)-2,3-dihydroxy-3-methylpentanoate = (S)-3-methyl-2-oxopentanoate + H2O. Its pathway is amino-acid biosynthesis; L-isoleucine biosynthesis; L-isoleucine from 2-oxobutanoate: step 3/4. It participates in amino-acid biosynthesis; L-valine biosynthesis; L-valine from pyruvate: step 3/4. Functions in the biosynthesis of branched-chain amino acids. Catalyzes the dehydration of (2R,3R)-2,3-dihydroxy-3-methylpentanoate (2,3-dihydroxy-3-methylvalerate) into 2-oxo-3-methylpentanoate (2-oxo-3-methylvalerate) and of (2R)-2,3-dihydroxy-3-methylbutanoate (2,3-dihydroxyisovalerate) into 2-oxo-3-methylbutanoate (2-oxoisovalerate), the penultimate precursor to L-isoleucine and L-valine, respectively. The sequence is that of Dihydroxy-acid dehydratase from Pseudomonas putida (strain ATCC 47054 / DSM 6125 / CFBP 8728 / NCIMB 11950 / KT2440).